Here is a 485-residue protein sequence, read N- to C-terminus: Signal recognition particle protein (485 aa).

Residues 107 to 114 (GLQGAGKT), 189 to 193 (DTAGR), and 247 to 250 (TKLD) contribute to the GTP site. The tract at residues 452–485 (GFGGGAPAPQPGFRGYGPPKKQKKGSKKKKGFGL) is disordered. The span at 471-485 (KKQKKGSKKKKGFGL) shows a compositional bias: basic residues.

It belongs to the GTP-binding SRP family. SRP54 subfamily. As to quaternary structure, part of the signal recognition particle protein translocation system, which is composed of SRP and FtsY.

It localises to the cytoplasm. The enzyme catalyses GTP + H2O = GDP + phosphate + H(+). In terms of biological role, involved in targeting and insertion of nascent membrane proteins into the cytoplasmic membrane. Binds to the hydrophobic signal sequence of the ribosome-nascent chain (RNC) as it emerges from the ribosomes. The SRP-RNC complex is then targeted to the cytoplasmic membrane where it interacts with the SRP receptor FtsY. The sequence is that of Signal recognition particle protein from Synechococcus elongatus (strain ATCC 33912 / PCC 7942 / FACHB-805) (Anacystis nidulans R2).